We begin with the raw amino-acid sequence, 234 residues long: UPF0758 protein STH371 (234 aa).

One can recognise an MPN domain in the interval 110 to 232 (DLCNPRAVFE…YTSFRERGLL (123 aa)). Zn(2+)-binding residues include histidine 181, histidine 183, and aspartate 194. The JAMM motif motif lies at 181–194 (HNHPSGDPTPSRED).

The protein belongs to the UPF0758 family.

In Symbiobacterium thermophilum (strain DSM 24528 / JCM 14929 / IAM 14863 / T), this protein is UPF0758 protein STH371.